The following is a 162-amino-acid chain: Phosphopantetheine adenylyltransferase (162 aa).

Ser11 provides a ligand contact to substrate. Residues 11-12 (SF) and His19 contribute to the ATP site. Residues Lys43, Val76, and Arg90 each contribute to the substrate site. Residues 91–93 (GLR), Glu101, and 126–132 (HLYISSS) each bind ATP.

It belongs to the bacterial CoaD family. As to quaternary structure, homohexamer. It depends on Mg(2+) as a cofactor.

The protein localises to the cytoplasm. The enzyme catalyses (R)-4'-phosphopantetheine + ATP + H(+) = 3'-dephospho-CoA + diphosphate. The protein operates within cofactor biosynthesis; coenzyme A biosynthesis; CoA from (R)-pantothenate: step 4/5. Reversibly transfers an adenylyl group from ATP to 4'-phosphopantetheine, yielding dephospho-CoA (dPCoA) and pyrophosphate. The polypeptide is Phosphopantetheine adenylyltransferase (Streptococcus pneumoniae (strain 70585)).